The primary structure comprises 351 residues: DNA polymerase IV (351 aa).

Positions 4–185 (IIHIDMDCFF…LPLAKIPGVG (182 aa)) constitute a UmuC domain. Residues Asp8 and Asp103 each coordinate Mg(2+). The active site involves Glu104.

This sequence belongs to the DNA polymerase type-Y family. In terms of assembly, monomer. Mg(2+) is required as a cofactor.

The protein localises to the cytoplasm. The catalysed reaction is DNA(n) + a 2'-deoxyribonucleoside 5'-triphosphate = DNA(n+1) + diphosphate. In terms of biological role, poorly processive, error-prone DNA polymerase involved in untargeted mutagenesis. Copies undamaged DNA at stalled replication forks, which arise in vivo from mismatched or misaligned primer ends. These misaligned primers can be extended by PolIV. Exhibits no 3'-5' exonuclease (proofreading) activity. May be involved in translesional synthesis, in conjunction with the beta clamp from PolIII. In Salmonella paratyphi A (strain ATCC 9150 / SARB42), this protein is DNA polymerase IV.